The chain runs to 420 residues: Zinc finger and BTB domain-containing protein 42 (420 aa).

The 69-residue stretch at 24–92 (CDCTVLVGDA…MYEGRLDLHN (69 aa)) folds into the BTB domain. Disordered regions lie at residues 127–204 (TRTL…HPPC) and 222–247 (VKAE…PPPV). Low complexity predominate over residues 227-241 (DSFSEQDSSSPQSAD). C2H2-type zinc fingers lie at residues 292–314 (CICP…LSAH), 332–354 (PTCP…ERTH), 360–382 (YTCV…AVVH), and 388–411 (HACR…RKFH).

Belongs to the krueppel C2H2-type zinc-finger protein family. ZBTB18 subfamily. Highly expressed in skeletal muscle and ovary (at protein level). Low expression in brain, lung, spleen, liver and heart (at protein level). Not detected in kidney and intestines (at protein level). Also observed in testis and, at lower levels, in stomach and nervous system.

It is found in the cytoplasm. It localises to the nucleus. The protein resides in the nucleoplasm. In terms of biological role, transcriptional repressor. Specifically binds DNA and probably acts by recruiting chromatin remodeling multiprotein complexes. The chain is Zinc finger and BTB domain-containing protein 42 (Zbtb42) from Mus musculus (Mouse).